A 318-amino-acid chain; its full sequence is Olfactory receptor 5G25 (318 aa).

The Extracellular segment spans residues 1-25 (MMHRNQTVVTEFFFTGLTSSFHLQI). An N-linked (GlcNAc...) asparagine glycan is attached at Asn5. Residues 26–46 (VLFLTFLCVYLATLLGNLGMI) form a helical membrane-spanning segment. Residues 47-54 (ILIHQDTR) are Cytoplasmic-facing. Residues 55 to 75 (LHIPMYFFLSHLSFVDACSSS) traverse the membrane as a helical segment. Residues 76–99 (VISPKMLSDIFVDKKVISFLGCAI) are Extracellular-facing. A disulfide bond links Cys97 and Cys189. Residues 100–120 (QFCLFSQFVVTECFLLASMAY) form a helical membrane-spanning segment. Residues 121–133 (DRYVAICKPLLYT) lie on the Cytoplasmic side of the membrane. A helical membrane pass occupies residues 134–154 (LIMSQRVCVQLVIGPYSIGLI). At 155–196 (STVVHTTSAFILPYCGPNLINHFFCDLLPVLSLACADTQMNK) the chain is on the extracellular side. A helical transmembrane segment spans residues 197–217 (HLLFIMAGILGVFSGIIILVS). The Cytoplasmic portion of the chain corresponds to 218–237 (YVYIAITILKINSADGRRKA). Residues 238-258 (FSTCSSHLTAVSILYGTLFFI) traverse the membrane as a helical segment. Residues 259–271 (YVRPSSSFSLDIN) are Extracellular-facing. A helical membrane pass occupies residues 272–292 (KVVSLFYTAVIPMLNPFIYSL). The Cytoplasmic portion of the chain corresponds to 293-318 (RNKEVKDALIRTFEKKFCYSLQDKIL).

It belongs to the G-protein coupled receptor 1 family.

The protein resides in the cell membrane. In terms of biological role, potential odorant receptor. This is Olfactory receptor 5G25 from Mus musculus (Mouse).